Here is a 185-residue protein sequence, read N- to C-terminus: Elongation factor P 1 (185 aa).

Belongs to the elongation factor P family.

It is found in the cytoplasm. The protein operates within protein biosynthesis; polypeptide chain elongation. In terms of biological role, involved in peptide bond synthesis. Stimulates efficient translation and peptide-bond synthesis on native or reconstituted 70S ribosomes in vitro. Probably functions indirectly by altering the affinity of the ribosome for aminoacyl-tRNA, thus increasing their reactivity as acceptors for peptidyl transferase. The polypeptide is Elongation factor P 1 (efp1) (Chlamydia pneumoniae (Chlamydophila pneumoniae)).